The following is a 748-amino-acid chain: Disintegrin and metalloproteinase domain-containing protein 10 (748 aa).

The signal sequence occupies residues 1–19 (MVLLRVLILLLSWAAGMGG). The propeptide occupies 20–213 (QYGNPLNKYI…NGPELLRKKR (194 aa)). Over 20 to 672 (QYGNPLNKYI…SPELYENIAE (653 aa)) the chain is Extracellular. The Cysteine switch motif lies at 171-178 (GGCADHSV). Cys-173 lines the Zn(2+) pocket. One can recognise a Peptidase M12B domain in the interval 220–456 (NTCQLYIQTD…KRNNCFVESG (237 aa)). Intrachain disulfides connect Cys-222/Cys-313, Cys-344/Cys-451, Cys-399/Cys-435, Cys-460/Cys-495, Cys-471/Cys-484, Cys-473/Cys-479, Cys-483/Cys-515, Cys-503/Cys-511, Cys-510/Cys-536, Cys-524/Cys-543, Cys-530/Cys-562, Cys-555/Cys-567, Cys-572/Cys-598, Cys-580/Cys-607, Cys-582/Cys-597, Cys-594/Cys-639, and Cys-632/Cys-645. Residues Asn-267 and Asn-278 are each glycosylated (N-linked (GlcNAc...) asparagine). A Zn(2+)-binding site is contributed by His-383. Glu-384 is a catalytic residue. 2 residues coordinate Zn(2+): His-387 and His-393. Residue Asn-439 is glycosylated (N-linked (GlcNAc...) asparagine). The region spanning 457–551 (QPICGNGMVE…LCPASDPKPN (95 aa)) is the Disintegrin domain. A glycan (N-linked (GlcNAc...) asparagine) is linked at Asn-551. A helical membrane pass occupies residues 673–693 (WIVAHWWAVLLMGIALIMLMA). Topologically, residues 694-748 (GFIKICSVHTPSSNPKLPPPKPLPGTLKRRRPPQPIQQPQRQRPRESYQMGHMRR) are cytoplasmic. Residues 704-748 (PSSNPKLPPPKPLPGTLKRRRPPQPIQQPQRQRPRESYQMGHMRR) are disordered. The SH3-binding signature appears at 708–715 (PKLPPPKP). Position 719 is a phosphothreonine; by FAM20C (Thr-719). Positions 722–728 (RRRPPQP) match the SH3-binding motif. The interval 734 to 748 (RQRPRESYQMGHMRR) is interaction with AP2A1, AP2A2 and AP2M1.

Forms a ternary EFNA5-EPHA3-ADAM10 complex mediating EFNA5 extracellular domain shedding by ADAM10 which regulates the EFNA5-EPHA3 complex internalization and function, the cleavage occurs in trans, with ADAM10 and its substrate being on the membranes of opposing cells. Interacts with the clathrin adapter AP2 complex subunits AP2A1, AP2A2, AP2B1, and AP2M1; this interaction facilitates ADAM10 endocytosis from the plasma membrane during long-term potentiation in hippocampal neurons. Forms a ternary complex composed of ADAM10, EPHA4 and CADH1; within the complex, ADAM10 cleaves CADH1 which disrupts adherens junctions. Interacts with EPHA2. Interacts with NGF in a divalent cation-dependent manner. Interacts with TSPAN14; the interaction promotes ADAM10 maturation and cell surface expression. Interacts with TSPAN5, TSPAN10, TSPAN14, TSPAN15, TSPAN17 and TSPAN33; these interactions regulate ADAM10 substrate specificity, endocytosis and turnover. Interacts (via extracellular domain) with TSPAN33 (via extracellular domain) and (via cytoplasmic domain) with AFDN; interaction with TSPAN33 allows the docking of ADAM10 to zonula adherens through a PDZ11-dependent interaction between TSPAN33 and PLEKHA7 while interaction with AFDN locks ADAM10 at zonula adherens. Interacts with DLG1; this interaction recruits ADAM10 to the cell membrane during long-term depression in hippocampal neurons. Interacts (via extracellular domain) with BACE1 (via extracellular domain). Interacts with FAM171A1. As to quaternary structure, (Microbial infection) Interacts with S.aureus hly; this interaction is necessary for toxin pore formation, disruption of focal adhesions and S.aureus hly-mediated cytotoxicity. Requires Zn(2+) as cofactor. In terms of processing, the precursor is cleaved by furin and PCSK7. As to expression, expressed in the brain (at protein level). Expressed in spleen, lymph node, thymus, peripheral blood leukocyte, bone marrow, cartilage, chondrocytes and fetal liver.

It localises to the cell membrane. The protein resides in the golgi apparatus membrane. The protein localises to the cytoplasmic vesicle. Its subcellular location is the clathrin-coated vesicle. It is found in the cell projection. It localises to the axon. The protein resides in the dendrite. The protein localises to the cell junction. Its subcellular location is the adherens junction. It is found in the cytoplasm. It catalyses the reaction Endopeptidase of broad specificity.. With respect to regulation, catalytically inactive when the propeptide is intact and associated with the mature enzyme. The disintegrin and cysteine-rich regions modulate access of substrates to exerts an inhibitory effect on the cleavage of ADAM10 substrates. In terms of biological role, transmembrane metalloprotease which mediates the ectodomain shedding of a myriad of transmembrane proteins, including adhesion proteins, growth factor precursors and cytokines being essential for development and tissue homeostasis. Associates with six members of the tetraspanin superfamily TspanC8 which regulate its exit from the endoplasmic reticulum and its substrate selectivity. Cleaves the membrane-bound precursor of TNF-alpha at '76-Ala-|-Val-77' to its mature soluble form. Responsible for the proteolytical release of soluble JAM3 from endothelial cells surface. Responsible for the proteolytic release of several other cell-surface proteins, including heparin-binding epidermal growth-like factor, ephrin-A2, CD44, CDH2 and for constitutive and regulated alpha-secretase cleavage of amyloid precursor protein (APP). Contributes to the normal cleavage of the cellular prion protein. Involved in the cleavage of the adhesion molecule L1 at the cell surface and in released membrane vesicles, suggesting a vesicle-based protease activity. Also controls the proteolytic processing of Notch and mediates lateral inhibition during neurogenesis. Required for the development of type 1 transitional B cells into marginal zone B cells, probably by cleaving Notch. Responsible for the FasL ectodomain shedding and for the generation of the remnant ADAM10-processed FasL (FasL APL) transmembrane form. Also cleaves the ectodomain of the integral membrane proteins CORIN and ITM2B. Mediates the proteolytic cleavage of LAG3, leading to release the secreted form of LAG3. Mediates the proteolytic cleavage of IL6R and IL11RA, leading to the release of secreted forms of IL6R and IL11RA. Enhances the cleavage of CHL1 by BACE1. Cleaves NRCAM. Cleaves TREM2, resulting in shedding of the TREM2 ectodomain. Involved in the development and maturation of glomerular and coronary vasculature. During development of the cochlear organ of Corti, promotes pillar cell separation by forming a ternary complex with CADH1 and EPHA4 and cleaving CADH1 at adherens junctions. May regulate the EFNA5-EPHA3 signaling. Regulates leukocyte transmigration as a sheddase for the adherens junction protein VE-cadherin/CDH5 in endothelial cells. Its function is as follows. (Microbial infection) Promotes the cytotoxic activity of S.aureus hly by binding to the toxin at zonula adherens and promoting formation of toxin pores. The sequence is that of Disintegrin and metalloproteinase domain-containing protein 10 from Homo sapiens (Human).